The primary structure comprises 205 residues: Holliday junction branch migration complex subunit RuvA (205 aa).

A domain I region spans residues 1–64 (MIGKLKGVVD…EDQIRLFGFS (64 aa)). The domain II stretch occupies residues 65–143 (SAAERDWFRL…GFSASEPLAA (79 aa)). Positions 144–152 (QLGGGGVAS) are flexible linker. The interval 153 to 205 (AQGGAAADAVSALVNLGYGVPQANAAIAAALRGAGEGAKTEVLIRLGLKELAK) is domain III.

Belongs to the RuvA family. As to quaternary structure, homotetramer. Forms an RuvA(8)-RuvB(12)-Holliday junction (HJ) complex. HJ DNA is sandwiched between 2 RuvA tetramers; dsDNA enters through RuvA and exits via RuvB. An RuvB hexamer assembles on each DNA strand where it exits the tetramer. Each RuvB hexamer is contacted by two RuvA subunits (via domain III) on 2 adjacent RuvB subunits; this complex drives branch migration. In the full resolvosome a probable DNA-RuvA(4)-RuvB(12)-RuvC(2) complex forms which resolves the HJ.

It localises to the cytoplasm. Functionally, the RuvA-RuvB-RuvC complex processes Holliday junction (HJ) DNA during genetic recombination and DNA repair, while the RuvA-RuvB complex plays an important role in the rescue of blocked DNA replication forks via replication fork reversal (RFR). RuvA specifically binds to HJ cruciform DNA, conferring on it an open structure. The RuvB hexamer acts as an ATP-dependent pump, pulling dsDNA into and through the RuvAB complex. HJ branch migration allows RuvC to scan DNA until it finds its consensus sequence, where it cleaves and resolves the cruciform DNA. The protein is Holliday junction branch migration complex subunit RuvA of Xanthobacter autotrophicus (strain ATCC BAA-1158 / Py2).